The sequence spans 101 residues: Small ribosomal subunit protein uS14 (101 aa).

This sequence belongs to the universal ribosomal protein uS14 family. In terms of assembly, part of the 30S ribosomal subunit. Contacts proteins S3 and S10.

Its function is as follows. Binds 16S rRNA, required for the assembly of 30S particles and may also be responsible for determining the conformation of the 16S rRNA at the A site. This Chelativorans sp. (strain BNC1) protein is Small ribosomal subunit protein uS14.